We begin with the raw amino-acid sequence, 459 residues long: Type IV methyl-directed restriction enzyme EcoKMcrB subunit (459 aa).

Residues 201-208 (GPPGVGKT), 300-303 (DKRG), and 333-336 (NTAD) each bind GTP.

Recognizes N4- and C5-methylcytosine (and 5-hydroxy-methylcytosines) produced by a broad range of DNA methylases and appears to act against 5-methylcytosine preceded by a purine residue. Binds to DNA containing methylated cytosines; also binds to GTP. Isoform 33 kDa is less active than isoform 51 kDa and may play a role in regulating the activity of isoform 51 kDa by competing with it in DNA and protein binding abilities. This Escherichia coli (strain K12) protein is Type IV methyl-directed restriction enzyme EcoKMcrB subunit (mcrB).